Consider the following 177-residue polypeptide: Large ribosomal subunit protein uL6 (177 aa).

Belongs to the universal ribosomal protein uL6 family. In terms of assembly, part of the 50S ribosomal subunit.

Its function is as follows. This protein binds to the 23S rRNA, and is important in its secondary structure. It is located near the subunit interface in the base of the L7/L12 stalk, and near the tRNA binding site of the peptidyltransferase center. The polypeptide is Large ribosomal subunit protein uL6 (Shewanella amazonensis (strain ATCC BAA-1098 / SB2B)).